We begin with the raw amino-acid sequence, 66 residues long: ATP synthase F(0) complex subunit 8 (66 aa).

The residue at position 1 (Met-1) is an N-formylmethionine. The chain crosses the membrane as a helical span at residues 8–24; that stretch reads TWLTMILSMFLTLFIIF. Residue Lys-54 is modified to N6-acetyllysine; alternate. Lys-54 is modified (N6-succinyllysine; alternate). Residue Lys-57 is modified to N6-acetyllysine.

Belongs to the ATPase protein 8 family. In terms of assembly, component of the ATP synthase complex composed at least of ATP5F1A/subunit alpha, ATP5F1B/subunit beta, ATP5MC1/subunit c (homooctomer), MT-ATP6/subunit a, MT-ATP8/subunit 8, ATP5ME/subunit e, ATP5MF/subunit f, ATP5MG/subunit g, ATP5MK/subunit k, ATP5MJ/subunit j, ATP5F1C/subunit gamma, ATP5F1D/subunit delta, ATP5F1E/subunit epsilon, ATP5PF/subunit F6, ATP5PB/subunit b, ATP5PD/subunit d, ATP5PO/subunit OSCP. ATP synthase complex consists of a soluble F(1) head domain (subunits alpha(3) and beta(3)) - the catalytic core - and a membrane F(0) domain - the membrane proton channel (subunits c, a, 8, e, f, g, k and j). These two domains are linked by a central stalk (subunits gamma, delta, and epsilon) rotating inside the F1 region and a stationary peripheral stalk (subunits F6, b, d, and OSCP). Interacts with PRICKLE3.

The protein resides in the mitochondrion membrane. Subunit 8, of the mitochondrial membrane ATP synthase complex (F(1)F(0) ATP synthase or Complex V) that produces ATP from ADP in the presence of a proton gradient across the membrane which is generated by electron transport complexes of the respiratory chain. ATP synthase complex consist of a soluble F(1) head domain - the catalytic core - and a membrane F(1) domain - the membrane proton channel. These two domains are linked by a central stalk rotating inside the F(1) region and a stationary peripheral stalk. During catalysis, ATP synthesis in the catalytic domain of F(1) is coupled via a rotary mechanism of the central stalk subunits to proton translocation. In vivo, can only synthesize ATP although its ATP hydrolase activity can be activated artificially in vitro. Part of the complex F(0) domain. This is ATP synthase F(0) complex subunit 8 from Bos taurus (Bovine).